Consider the following 139-residue polypeptide: Diacylglycerol acyltransferase/mycolyltransferase Ag85A (139 aa).

Serine 10 acts as the Nucleophile in catalysis. Substrate is bound by residues serine 10 and aspartate 38. The active site involves glutamate 114. Substrate contacts are provided by residues 116 to 119 and lysine 123; that span reads FVRT.

It belongs to the mycobacterial A85 antigen family. As to quaternary structure, homodimer.

It is found in the secreted. The protein resides in the cell wall. The protein localises to the cytoplasm. It catalyses the reaction an acyl-CoA + a 1,2-diacyl-sn-glycerol = a triacyl-sn-glycerol + CoA. The enzyme catalyses 2 alpha,alpha'-trehalose 6-mycolate = alpha,alpha'-trehalose 6,6'-bismycolate + alpha,alpha-trehalose. The antigen 85 proteins (FbpA, FbpB, FbpC) are responsible for the high affinity of mycobacteria for fibronectin, a large adhesive glycoprotein, which facilitates the attachment of M.tuberculosis to murine alveolar macrophages (AMs). They also help to maintain the integrity of the cell wall by catalyzing the transfer of mycolic acids to cell wall arabinogalactan, and through the synthesis of alpha,alpha-trehalose dimycolate (TDM, cord factor). They catalyze the transfer of a mycoloyl residue from one molecule of alpha,alpha-trehalose monomycolate (TMM) to another TMM, leading to the formation of TDM. FbpA mediates triacylglycerol (TAG) formation with long-chain acyl-CoA as the acyl donor and 1,2-dipalmitoyl-sn-glycerol (1,2-dipalmitin) as the acyl acceptor. It has a preference for C26:0-CoA over C18:1-CoA. This is Diacylglycerol acyltransferase/mycolyltransferase Ag85A (fbpA) from Mycobacterium marinum.